Here is a 406-residue protein sequence, read N- to C-terminus: N-acetylmuramoyl-L-alanine amidase CwlM (406 aa).

Peptidoglycan-binding domain regions lie at residues Ser-18 to Leu-83 and Gly-105 to Leu-160. In terms of domain architecture, MurNAc-LAA spans Ile-193 to Lys-370.

It belongs to the N-acetylmuramoyl-L-alanine amidase 3 family.

Its subcellular location is the periplasm. The catalysed reaction is Hydrolyzes the link between N-acetylmuramoyl residues and L-amino acid residues in certain cell-wall glycopeptides.. The protein operates within cell wall degradation; peptidoglycan degradation. Functionally, cell-wall hydrolase that hydrolyzes the amide bond between N-acetylmuramic acid and L-alanine in cell-wall glycopeptides. Is able to lyse whole mycobacteria, release peptidoglycan from the cell wall of M.luteus and M.smegmatis, and cleave N-acetylmuramoyl-L-alanyl-D-isoglutamine, releasing free N-acetylmuramic acid and dipeptide. The chain is N-acetylmuramoyl-L-alanine amidase CwlM from Mycobacterium tuberculosis (strain ATCC 25618 / H37Rv).